Reading from the N-terminus, the 326-residue chain is DNA-directed RNA polymerase subunit alpha (326 aa).

The alpha N-terminal domain (alpha-NTD) stretch occupies residues 1–231 (MQTNLLKPKI…DQLVVFAALE (231 aa)). Residues 247–326 (VDPMLMRPVD…ESWPPANLEK (80 aa)) form an alpha C-terminal domain (alpha-CTD) region.

The protein belongs to the RNA polymerase alpha chain family. In terms of assembly, homodimer. The RNAP catalytic core consists of 2 alpha, 1 beta, 1 beta' and 1 omega subunit. When a sigma factor is associated with the core the holoenzyme is formed, which can initiate transcription.

It catalyses the reaction RNA(n) + a ribonucleoside 5'-triphosphate = RNA(n+1) + diphosphate. Its function is as follows. DNA-dependent RNA polymerase catalyzes the transcription of DNA into RNA using the four ribonucleoside triphosphates as substrates. This chain is DNA-directed RNA polymerase subunit alpha, found in Polynucleobacter necessarius subsp. necessarius (strain STIR1).